The primary structure comprises 786 residues: MRRSLAPSQRLGVRIKSKDAFTPPLLKKNKRACQQELEKRQSALRDATNIVELPLPIRFTANSEYEQAIAKVLARKFKVPIANYVPDYGGNRSLGVRRSIVRRALHDPLACNALVLFTPPVYTEHERMSLDPSKLQVHVVVDPLLSNVLRPHQREGVRFMYECVEGKRGSFNGCIMADEMGLGKTLQCVTLTWTLLRQSADCKPTISKAIVVSPSSLVKNWEKEFTKWLHGRMHCLAMEGGSKEETTRTLEQFAMNTSTRCGTPVLLISYETFRLYAHILCKTEVGMVICDEGHRLKNSDNLTYQALMGLKTKRRVLLSGTPIQNDLTEYFSLVNFVNPEMLGTATDFKRNFENAILRGQNADSTDTERERALLKTQELIGLVNQCIIRRTNQILTKYLPVKFEMVVCAKLTAVQLQIYTNFLKSDQVCRSLADCNEKTSLTALSDITTLKKLCNHPDLIYEKLAAREKGFENSQNVLPANYKPKDINPELSGKFMLLDFMLAAIRANSDDKVVLISNYTQTLDLFEQLARKRKYSYVRLDGTMTIKKRSKVVDRFNDPSSDCFLFMLSSKAGGCGLNLIGANRLFMFDPDWNPANDEQAMARVWRDGQKKPCYIYRLVASGSIEEKILQRQTHKKSLSSTIIDNNESVEKHFTRDDLKDLFSFEANVLSDTHNKLKCKRCFQDVQRQPPADNTDCTSHLSQWFHCSNNRGLPDTILSQAWTASKCVSFVFHHRSQAEAKPAATTTDEDEELSDSKRKAKKTLASDDDDDEDFVLNCSSGEEFSGF.

The tract at residues 2-9 (RRSLAPSQ) is required for chromatin remodeling, strand pairing activities and coupling of ATPase activity. Thr-22 is modified (phosphothreonine). Residues 165-340 (EGKRGSFNGC…FSLVNFVNPE (176 aa)) form the Helicase ATP-binding domain. 178 to 185 (DEMGLGKT) is an ATP binding site. The DEGH box motif lies at 291-294 (DEGH). In terms of domain architecture, Helicase C-terminal spans 497–654 (LLDFMLAAIR…NNESVEKHFT (158 aa)). The disordered stretch occupies residues 738–786 (EAKPAATTTDEDEELSDSKRKAKKTLASDDDDDEDFVLNCSSGEEFSGF). Polar residues predominate over residues 776 to 786 (NCSSGEEFSGF).

The protein belongs to the SNF2/RAD54 helicase family. Interacts (via N-terminus) with spn-A/Rad51.

The protein localises to the nucleus. In terms of biological role, involved in mitotic DNA repair and meiotic recombination. Functions in the recombinational DNA repair pathway. Essential for interhomolog gene conversion (GC), but may have a less important role in intersister GC than spn-A/Rad51. In the presence of DNA, spn-A/Rad51 enhances the ATPase activity of okr/Rad54. This is DNA repair and recombination protein RAD54-like from Drosophila grimshawi (Hawaiian fruit fly).